The chain runs to 874 residues: Probable leucine--tRNA ligase, cytoplasmic (874 aa).

The 'HIGH' region signature appears at 36–46 (PYMNGRLHLGH). The 'KMSKS' region signature appears at 544-548 (KMSKS). K547 is an ATP binding site.

The protein belongs to the class-I aminoacyl-tRNA synthetase family.

It localises to the cytoplasm. The enzyme catalyses tRNA(Leu) + L-leucine + ATP = L-leucyl-tRNA(Leu) + AMP + diphosphate. This chain is Probable leucine--tRNA ligase, cytoplasmic, found in Encephalitozoon cuniculi (strain GB-M1) (Microsporidian parasite).